The following is a 587-amino-acid chain: Arginine--tRNA ligase (587 aa).

Positions 127–137 match the 'HIGH' region motif; sequence ANPTGPLHVGH.

Belongs to the class-I aminoacyl-tRNA synthetase family. Monomer.

It is found in the cytoplasm. The catalysed reaction is tRNA(Arg) + L-arginine + ATP = L-arginyl-tRNA(Arg) + AMP + diphosphate. The chain is Arginine--tRNA ligase from Dechloromonas aromatica (strain RCB).